The following is a 226-amino-acid chain: 3-dehydroquinate dehydratase (226 aa).

Residues Glu-30–Arg-32 and Arg-62 contribute to the 3-dehydroquinate site. Catalysis depends on His-118, which acts as the Proton donor/acceptor. Lys-143 (schiff-base intermediate with substrate) is an active-site residue. Arg-186, Ser-205, and Gln-209 together coordinate 3-dehydroquinate.

The protein belongs to the type-I 3-dehydroquinase family. As to quaternary structure, homodimer.

The enzyme catalyses 3-dehydroquinate = 3-dehydroshikimate + H2O. Its pathway is metabolic intermediate biosynthesis; chorismate biosynthesis; chorismate from D-erythrose 4-phosphate and phosphoenolpyruvate: step 3/7. Functionally, involved in the third step of the chorismate pathway, which leads to the biosynthesis of aromatic amino acids. Catalyzes the cis-dehydration of 3-dehydroquinate (DHQ) and introduces the first double bond of the aromatic ring to yield 3-dehydroshikimate. This chain is 3-dehydroquinate dehydratase, found in Streptococcus equi subsp. zooepidemicus (strain H70).